We begin with the raw amino-acid sequence, 197 residues long: Peptide deformylase (197 aa).

Residues C106 and H148 each contribute to the Fe cation site. E149 is a catalytic residue. Position 152 (H152) interacts with Fe cation.

This sequence belongs to the polypeptide deformylase family. Fe(2+) is required as a cofactor.

It carries out the reaction N-terminal N-formyl-L-methionyl-[peptide] + H2O = N-terminal L-methionyl-[peptide] + formate. Its function is as follows. Removes the formyl group from the N-terminal Met of newly synthesized proteins. Requires at least a dipeptide for an efficient rate of reaction. N-terminal L-methionine is a prerequisite for activity but the enzyme has broad specificity at other positions. In Mycobacteroides abscessus (strain ATCC 19977 / DSM 44196 / CCUG 20993 / CIP 104536 / JCM 13569 / NCTC 13031 / TMC 1543 / L948) (Mycobacterium abscessus), this protein is Peptide deformylase.